The chain runs to 174 residues: Single-stranded DNA-binding protein 1 (174 aa).

The SSB domain occupies 6–111 (VNKVILVGNL…VVVNVGGTMQ (106 aa)). A DNA-binding region spans residues 55–61 (WHRVVLF). The segment at 110–174 (MQMLGGRQGG…PMDFDDDIPF (65 aa)) is disordered. Residues 115–133 (GRQGGGAPAGGGQQQGGWG) show a composition bias toward gly residues. The segment covering 134–160 (QPQQPQGGNQFSGGAQSRPQQQAPAAP) has biased composition (low complexity). An Important for interaction with partner proteins motif is present at residues 169–174 (DDDIPF).

As to quaternary structure, homotetramer. Binds PriA via its C-terminus.

Functionally, plays an important role in DNA replication, recombination and repair. Binds to ssDNA and to an array of partner proteins to recruit them to their sites of action during DNA metabolism. Stimulates the ATPase activity of PriA. One tetramer binds to 26 nucleotides (nt) of ssDNA, a 55 nt piece of ssDNA probably binds 2 tetramers. This chain is Single-stranded DNA-binding protein 1, found in Klebsiella pneumoniae subsp. pneumoniae (strain ATCC 700721 / MGH 78578).